Here is a 321-residue protein sequence, read N- to C-terminus: UDP-N-acetylenolpyruvoylglucosamine reductase (321 aa).

The FAD-binding PCMH-type domain maps to Phe36–Glu203. Arg183 is a catalytic residue. Ser232 functions as the Proton donor in the catalytic mechanism. Residue Glu302 is part of the active site.

The protein belongs to the MurB family. Requires FAD as cofactor.

It is found in the cytoplasm. It catalyses the reaction UDP-N-acetyl-alpha-D-muramate + NADP(+) = UDP-N-acetyl-3-O-(1-carboxyvinyl)-alpha-D-glucosamine + NADPH + H(+). It functions in the pathway cell wall biogenesis; peptidoglycan biosynthesis. Its function is as follows. Cell wall formation. This chain is UDP-N-acetylenolpyruvoylglucosamine reductase, found in Agrobacterium fabrum (strain C58 / ATCC 33970) (Agrobacterium tumefaciens (strain C58)).